We begin with the raw amino-acid sequence, 298 residues long: Anamorsin homolog (298 aa).

The segment at 1–143 is N-terminal SAM-like domain; the sequence is MTQLIITHQS…IKAEKPSWKP (143 aa). Residues 143-162 are linker; it reads PEEGKVLVDDIDLEGSVPDI. Positions 175, 182, 185, and 187 each coordinate [2Fe-2S] cluster. The interval 175-187 is fe-S binding site A; it reads CKSKERACNNCNC. [4Fe-4S] cluster is bound by residues C218, C221, C229, and C232. 2 consecutive short sequence motifs (cx2C motif) follow at residues 218-221 and 229-232; these read CGNC and CSGC. A fe-S binding site B region spans residues 218-232; it reads CGNCYLGDAFRCSGC.

Belongs to the anamorsin family. As to quaternary structure, monomer. [2Fe-2S] cluster serves as cofactor. Requires [4Fe-4S] cluster as cofactor.

The protein localises to the cytoplasm. It localises to the mitochondrion intermembrane space. Component of the cytosolic iron-sulfur (Fe-S) protein assembly (CIA) machinery. Required for the maturation of extramitochondrial Fe-S proteins. Part of an electron transfer chain functioning in an early step of cytosolic Fe-S biogenesis, facilitating the de novo assembly of a [4Fe-4S] cluster on the cytosolic Fe-S scaffold complex. Electrons are transferred from NADPH via a FAD- and FMN-containing diflavin oxidoreductase. Together with the diflavin oxidoreductase, also required for the assembly of the diferric tyrosyl radical cofactor of ribonucleotide reductase (RNR), probably by providing electrons for reduction during radical cofactor maturation in the catalytic small subunit. This Cryptosporidium parvum (strain Iowa II) protein is Anamorsin homolog.